A 177-amino-acid polypeptide reads, in one-letter code: Thymidine kinase (177 aa).

11–18 lines the ATP pocket; that stretch reads GPMFSGKS. E83 serves as the catalytic Proton acceptor. F113 contacts substrate. The Zn(2+) site is built by C138 and C141. A substrate-binding site is contributed by 157 to 161; that stretch reads IEIIG. Residues C170 and C173 each coordinate Zn(2+).

This sequence belongs to the thymidine kinase family. Homotetramer. Two molecules of substrate bind to each enzyme tetramer.

The catalysed reaction is thymidine + ATP = dTMP + ADP + H(+). In terms of biological role, phosphorylates thymidine and thymidine analogs, such as azidothymidine (AZT). Part of the salvage pathway for pyrimidine deoxyribonucleotide synthesis. The chain is Thymidine kinase (OPG101) from Procyon lotor (Raccoon).